The following is a 238-amino-acid chain: Ribitol-5-phosphate cytidylyltransferase 2 (238 aa).

Residues 7 to 10 and 81 to 87 contribute to the CTP site; these read LAGG and GTDRNET.

Belongs to the IspD/TarI cytidylyltransferase family. TarI subfamily.

It carries out the reaction D-ribitol 5-phosphate + CTP + H(+) = CDP-L-ribitol + diphosphate. The protein operates within cell wall biogenesis; poly(ribitol phosphate) teichoic acid biosynthesis. Functionally, catalyzes the transfer of the cytidylyl group of CTP to D-ribitol 5-phosphate. The chain is Ribitol-5-phosphate cytidylyltransferase 2 from Staphylococcus aureus (strain MSSA476).